Consider the following 274-residue polypeptide: Cytochrome b-c1 complex subunit Rieske, mitochondrial (274 aa).

Topologically, residues 79 to 103 (SHTDIKVPDFSDYRRSEVLDKTKSS) are mitochondrial matrix. The helical transmembrane segment at 104–140 (RESSDARKGFSYLVTAATAVGVTYAAKSIVTQFVSSM) threads the bilayer. The Mitochondrial intermembrane segment spans residues 141 to 274 (SASADVLAMS…FTGDDMVIVG (134 aa)). Residues 187–272 (EAAVELSQLR…YEFTGDDMVI (86 aa)) form the Rieske domain. [2Fe-2S] cluster-binding residues include Cys217, His219, Cys236, His239, and Ser241. Cys222 and Cys238 are joined by a disulfide.

This sequence belongs to the Rieske iron-sulfur protein family. As to quaternary structure, component of the ubiquinol-cytochrome c oxidoreductase (cytochrome b-c1 complex, complex III, CIII), a multisubunit enzyme composed of 11 subunits. The complex is composed of 3 respiratory subunits cytochrome b, cytochrome c1 and Rieske protein UQCRFS1, 2 core protein subunits UQCRC1/QCR1 and UQCRC2/QCR2, and 6 low-molecular weight protein subunits UQCRH/QCR6, UQCRB/QCR7, UQCRQ/QCR8, UQCR10/QCR9, UQCR11/QCR10 and subunit 9, the cleavage product of Rieske protein UQCRFS1. The complex exists as an obligatory dimer and forms supercomplexes (SCs) in the inner mitochondrial membrane with NADH-ubiquinone oxidoreductase (complex I, CI) and cytochrome c oxidase (complex IV, CIV), resulting in different assemblies (supercomplex SCI(1)III(2)IV(1) and megacomplex MCI(2)III(2)IV(2)). Incorporation of the Rieske protein UQCRFS1 is the penultimate step in complex III assembly. Interacts with TTC19, which is involved in the clearance of UQCRFS1 fragments. In terms of assembly, component of the ubiquinol-cytochrome c oxidoreductase (cytochrome b-c1 complex, complex III, CIII). Subunit 9 corresponds to the mitochondrial targeting sequence (MTS) of Rieske protein UQCRFS1. It is retained after processing and incorporated inside complex III, where it remains bound to the complex and localizes between the 2 core subunits UQCRC1/QCR1 and UQCRC2/QCR2. It depends on [2Fe-2S] cluster as a cofactor. Post-translationally, proteolytic processing is necessary for the correct insertion of UQCRFS1 in the complex III dimer. Several fragments are generated during UQCRFS1 insertion, most probably due to the endogenous matrix-processing peptidase (MPP) activity of the 2 core protein subunits UQCRC1/QCR1 and UQCRC2/QCR2, which are homologous to the 2 mitochondrial-processing peptidase (MPP) subunits beta-MPP and alpha-MPP respectively. The action of the protease is also necessary for the clearance of the UQCRFS1 fragments.

The protein localises to the mitochondrion inner membrane. It catalyses the reaction a quinol + 2 Fe(III)-[cytochrome c](out) = a quinone + 2 Fe(II)-[cytochrome c](out) + 2 H(+)(out). Functionally, component of the ubiquinol-cytochrome c oxidoreductase, a multisubunit transmembrane complex that is part of the mitochondrial electron transport chain which drives oxidative phosphorylation. The respiratory chain contains 3 multisubunit complexes succinate dehydrogenase (complex II, CII), ubiquinol-cytochrome c oxidoreductase (cytochrome b-c1 complex, complex III, CIII) and cytochrome c oxidase (complex IV, CIV), that cooperate to transfer electrons derived from NADH and succinate to molecular oxygen, creating an electrochemical gradient over the inner membrane that drives transmembrane transport and the ATP synthase. The cytochrome b-c1 complex catalyzes electron transfer from ubiquinol to cytochrome c, linking this redox reaction to translocation of protons across the mitochondrial inner membrane, with protons being carried across the membrane as hydrogens on the quinol. In the process called Q cycle, 2 protons are consumed from the matrix, 4 protons are released into the intermembrane space and 2 electrons are passed to cytochrome c. The Rieske protein is a catalytic core subunit containing a [2Fe-2S] iron-sulfur cluster. It cycles between 2 conformational states during catalysis to transfer electrons from the quinol bound in the Q(0) site in cytochrome b to cytochrome c1. Incorporation of UQCRFS1 is the penultimate step in complex III assembly. Its function is as follows. Component of the ubiquinol-cytochrome c oxidoreductase (cytochrome b-c1 complex, complex III, CIII). UQCRFS1 undergoes proteolytic processing once it is incorporated in the complex III dimer. One of the fragments, called subunit 9, corresponds to its mitochondrial targeting sequence (MTS). The proteolytic processing is necessary for the correct insertion of UQCRFS1 in the complex III dimer, but the persistence of UQCRFS1-derived fragments may prevent newly imported UQCRFS1 to be processed and assembled into complex III and is detrimental for the complex III structure and function. This chain is Cytochrome b-c1 complex subunit Rieske, mitochondrial (UQCRFS1), found in Lagothrix lagotricha (Brown woolly monkey).